The sequence spans 365 residues: S-adenosylmethionine decarboxylase proenzyme (365 aa).

Catalysis depends on residues glutamate 31 and glutamate 34. The active-site Schiff-base intermediate with substrate; via pyruvic acid is serine 87. Serine 87 bears the Pyruvic acid (Ser); by autocatalysis mark. The Proton donor; for catalytic activity role is filled by cysteine 101. Active-site proton acceptor; for processing activity residues include serine 248 and histidine 263.

Belongs to the eukaryotic AdoMetDC family. Heterotetramer of two alpha and two beta chains. The cofactor is pyruvate. In terms of processing, is synthesized initially as an inactive proenzyme. Formation of the active enzyme involves a self-maturation process in which the active site pyruvoyl group is generated from an internal serine residue via an autocatalytic post-translational modification. Two non-identical subunits are generated from the proenzyme in this reaction, and the pyruvate is formed at the N-terminus of the alpha chain, which is derived from the carboxyl end of the proenzyme. The post-translation cleavage follows an unusual pathway, termed non-hydrolytic serinolysis, in which the side chain hydroxyl group of the serine supplies its oxygen atom to form the C-terminus of the beta chain, while the remainder of the serine residue undergoes an oxidative deamination to produce ammonia and the pyruvoyl group blocking the N-terminus of the alpha chain.

It catalyses the reaction S-adenosyl-L-methionine + H(+) = S-adenosyl 3-(methylsulfanyl)propylamine + CO2. It functions in the pathway amine and polyamine biosynthesis; S-adenosylmethioninamine biosynthesis; S-adenosylmethioninamine from S-adenosyl-L-methionine: step 1/1. The polypeptide is S-adenosylmethionine decarboxylase proenzyme (smd-1) (Onchocerca volvulus).